The chain runs to 122 residues: Flagellar protein FliT (122 aa).

The required for homodimerization stretch occupies residues 1–50; it reads MTSTVEFINRWQRIALLSQSLLELAQRGEWDLLLQQEVSYLQSIETVMEK. The segment at 60 to 98 is fliD binding; sequence IQDMVAGYIKQTLDNEQLLKGLLQQRLDELSSLIGQSTR.

The protein belongs to the FliT family. As to quaternary structure, homodimer. Interacts with FliD and FlhC.

It localises to the cytoplasm. Its subcellular location is the cytosol. In terms of biological role, dual-function protein that regulates the transcription of class 2 flagellar operons and that also acts as an export chaperone for the filament-capping protein FliD. As a transcriptional regulator, acts as an anti-FlhDC factor; it directly binds FlhC, thus inhibiting the binding of the FlhC/FlhD complex to class 2 promoters, resulting in decreased expression of class 2 flagellar operons. As a chaperone, effects FliD transition to the membrane by preventing its premature polymerization, and by directing it to the export apparatus. This is Flagellar protein FliT from Salmonella gallinarum (strain 287/91 / NCTC 13346).